The primary structure comprises 142 residues: Large ribosomal subunit protein uL11 (142 aa).

Belongs to the universal ribosomal protein uL11 family. Part of the ribosomal stalk of the 50S ribosomal subunit. Interacts with L10 and the large rRNA to form the base of the stalk. L10 forms an elongated spine to which L12 dimers bind in a sequential fashion forming a multimeric L10(L12)X complex. One or more lysine residues are methylated.

Functionally, forms part of the ribosomal stalk which helps the ribosome interact with GTP-bound translation factors. This chain is Large ribosomal subunit protein uL11, found in Desulfitobacterium hafniense (strain DSM 10664 / DCB-2).